The chain runs to 457 residues: Siroheme synthase (457 aa).

The segment at 1-204 is precorrin-2 dehydrogenase /sirohydrochlorin ferrochelatase; that stretch reads MDHLPIFCQL…NDQKAITETT (204 aa). Residues 22-23 and 43-44 each bind NAD(+); these read DV and LA. Position 128 is a phosphoserine (Ser128). A uroporphyrinogen-III C-methyltransferase region spans residues 216-457; it reads GEVVLVGAGP…RDKLNWFSNH (242 aa). Residue Pro225 participates in S-adenosyl-L-methionine binding. Asp248 (proton acceptor) is an active-site residue. The active-site Proton donor is Lys270. Residues 301 to 303, Ile306, 331 to 332, Met382, and Gly411 each bind S-adenosyl-L-methionine; these read GGD and TA.

It in the N-terminal section; belongs to the precorrin-2 dehydrogenase / sirohydrochlorin ferrochelatase family. The protein in the C-terminal section; belongs to the precorrin methyltransferase family.

It carries out the reaction uroporphyrinogen III + 2 S-adenosyl-L-methionine = precorrin-2 + 2 S-adenosyl-L-homocysteine + H(+). The catalysed reaction is precorrin-2 + NAD(+) = sirohydrochlorin + NADH + 2 H(+). It catalyses the reaction siroheme + 2 H(+) = sirohydrochlorin + Fe(2+). It participates in cofactor biosynthesis; adenosylcobalamin biosynthesis; precorrin-2 from uroporphyrinogen III: step 1/1. The protein operates within cofactor biosynthesis; adenosylcobalamin biosynthesis; sirohydrochlorin from precorrin-2: step 1/1. It functions in the pathway porphyrin-containing compound metabolism; siroheme biosynthesis; precorrin-2 from uroporphyrinogen III: step 1/1. Its pathway is porphyrin-containing compound metabolism; siroheme biosynthesis; siroheme from sirohydrochlorin: step 1/1. It participates in porphyrin-containing compound metabolism; siroheme biosynthesis; sirohydrochlorin from precorrin-2: step 1/1. Multifunctional enzyme that catalyzes the SAM-dependent methylations of uroporphyrinogen III at position C-2 and C-7 to form precorrin-2 via precorrin-1. Then it catalyzes the NAD-dependent ring dehydrogenation of precorrin-2 to yield sirohydrochlorin. Finally, it catalyzes the ferrochelation of sirohydrochlorin to yield siroheme. In Escherichia coli O157:H7 (strain EC4115 / EHEC), this protein is Siroheme synthase.